A 127-amino-acid chain; its full sequence is Protein translocase subunit SecE (127 aa).

The Cytoplasmic portion of the chain corresponds to 1–19 (MSANTEAQGSGRGLEAMKW). A helical transmembrane segment spans residues 20–32 (VVVVALLLVAIVG). At 33–48 (NYLYRDIMLPLRALAV) the chain is on the periplasmic side. The chain crosses the membrane as a helical span at residues 49–60 (VILIAAAGGVAL). The Cytoplasmic segment spans residues 61–97 (LTTKGKATVAFAREARTEVRKVIWPTRQETLHTTLIV). The chain crosses the membrane as a helical span at residues 98 to 115 (AAVTAVMSLILWGLDGIL). Over 116-127 (VRLVSFITGLRF) the chain is Periplasmic.

The protein belongs to the SecE/SEC61-gamma family. Component of the Sec protein translocase complex. Heterotrimer consisting of SecY, SecE and SecG subunits. The heterotrimers can form oligomers, although 1 heterotrimer is thought to be able to translocate proteins. Interacts with the ribosome. Interacts with SecDF, and other proteins may be involved. Interacts with SecA.

Its subcellular location is the cell inner membrane. Functionally, essential subunit of the Sec protein translocation channel SecYEG. Clamps together the 2 halves of SecY. May contact the channel plug during translocation. This is Protein translocase subunit SecE from Escherichia coli O157:H7.